The sequence spans 89 residues: Small ribosomal subunit protein uS15 (89 aa).

The protein belongs to the universal ribosomal protein uS15 family. As to quaternary structure, part of the 30S ribosomal subunit. Forms a bridge to the 50S subunit in the 70S ribosome, contacting the 23S rRNA.

One of the primary rRNA binding proteins, it binds directly to 16S rRNA where it helps nucleate assembly of the platform of the 30S subunit by binding and bridging several RNA helices of the 16S rRNA. Functionally, forms an intersubunit bridge (bridge B4) with the 23S rRNA of the 50S subunit in the ribosome. The chain is Small ribosomal subunit protein uS15 from Maridesulfovibrio salexigens (strain ATCC 14822 / DSM 2638 / NCIMB 8403 / VKM B-1763) (Desulfovibrio salexigens).